The primary structure comprises 315 residues: Biotin synthase (315 aa).

Positions 39–266 (NSLQFATLLS…KSAIRLTAGR (228 aa)) constitute a Radical SAM core domain. [4Fe-4S] cluster is bound by residues C54, C58, and C61. [2Fe-2S] cluster-binding residues include C98, C129, C189, and R261.

The protein belongs to the radical SAM superfamily. Biotin synthase family. As to quaternary structure, homodimer. Requires [4Fe-4S] cluster as cofactor. The cofactor is [2Fe-2S] cluster.

The enzyme catalyses (4R,5S)-dethiobiotin + (sulfur carrier)-SH + 2 reduced [2Fe-2S]-[ferredoxin] + 2 S-adenosyl-L-methionine = (sulfur carrier)-H + biotin + 2 5'-deoxyadenosine + 2 L-methionine + 2 oxidized [2Fe-2S]-[ferredoxin]. It participates in cofactor biosynthesis; biotin biosynthesis; biotin from 7,8-diaminononanoate: step 2/2. Functionally, catalyzes the conversion of dethiobiotin (DTB) to biotin by the insertion of a sulfur atom into dethiobiotin via a radical-based mechanism. The sequence is that of Biotin synthase from Legionella pneumophila (strain Corby).